We begin with the raw amino-acid sequence, 274 residues long: Ribosomal RNA small subunit methyltransferase A (274 aa).

His-15, Leu-17, Gly-42, Glu-64, Asp-89, and Asn-109 together coordinate S-adenosyl-L-methionine.

The protein belongs to the class I-like SAM-binding methyltransferase superfamily. rRNA adenine N(6)-methyltransferase family. RsmA subfamily.

The protein resides in the cytoplasm. It catalyses the reaction adenosine(1518)/adenosine(1519) in 16S rRNA + 4 S-adenosyl-L-methionine = N(6)-dimethyladenosine(1518)/N(6)-dimethyladenosine(1519) in 16S rRNA + 4 S-adenosyl-L-homocysteine + 4 H(+). In terms of biological role, specifically dimethylates two adjacent adenosines (A1518 and A1519) in the loop of a conserved hairpin near the 3'-end of 16S rRNA in the 30S particle. May play a critical role in biogenesis of 30S subunits. The sequence is that of Ribosomal RNA small subunit methyltransferase A from Synechococcus sp. (strain CC9902).